Consider the following 71-residue polypeptide: Large ribosomal subunit protein bL31 (71 aa).

Zn(2+) is bound by residues cysteine 16, cysteine 18, cysteine 37, and cysteine 40.

This sequence belongs to the bacterial ribosomal protein bL31 family. Type A subfamily. In terms of assembly, part of the 50S ribosomal subunit. Zn(2+) is required as a cofactor.

In terms of biological role, binds the 23S rRNA. In Pseudomonas entomophila (strain L48), this protein is Large ribosomal subunit protein bL31.